Consider the following 310-residue polypeptide: MGENQTMVTEFLLLGFLLGPRIQMLLFGLFSLFYIFTLLGNGAILGLISLDSRLHTPMYFFLSHLAVVDIAYTRNTVPQMLANLLHPAKPISFAGCMTQTFLCLSFGHSECLLLVLMSYDRYVAICHPLRYSVIMTWRVCITLAVTSWTCGSLLALAHVVLILRLPFSGPHEINHFFCEILSVLRLACADTWLNQVVIFAACVFFLVGPPSLVLVSYSHILAAILRIQSGEGRRKAFSTCSSHLCVVGLFFGSAIIMYMAPKSRHPEEQQKVFFLFYSFFNPTLNPLIYSLRNGEVKGALRRALGKESHS.

Over 1–24 the chain is Extracellular; it reads MGENQTMVTEFLLLGFLLGPRIQM. An N-linked (GlcNAc...) asparagine glycan is attached at Asn-4. The chain crosses the membrane as a helical span at residues 25–48; sequence LLFGLFSLFYIFTLLGNGAILGLI. Residues 49-56 lie on the Cytoplasmic side of the membrane; it reads SLDSRLHT. The helical transmembrane segment at 57–78 threads the bilayer; the sequence is PMYFFLSHLAVVDIAYTRNTVP. Residues 79–99 are Extracellular-facing; that stretch reads QMLANLLHPAKPISFAGCMTQ. Residues Cys-96 and Cys-188 are joined by a disulfide bond. A helical membrane pass occupies residues 100–119; the sequence is TFLCLSFGHSECLLLVLMSY. Residues 120 to 138 are Cytoplasmic-facing; the sequence is DRYVAICHPLRYSVIMTWR. The chain crosses the membrane as a helical span at residues 139 to 157; that stretch reads VCITLAVTSWTCGSLLALA. Residues 158–195 are Extracellular-facing; the sequence is HVVLILRLPFSGPHEINHFFCEILSVLRLACADTWLNQ. A helical membrane pass occupies residues 196-218; it reads VVIFAACVFFLVGPPSLVLVSYS. Over 219-235 the chain is Cytoplasmic; the sequence is HILAAILRIQSGEGRRK. The chain crosses the membrane as a helical span at residues 236-258; that stretch reads AFSTCSSHLCVVGLFFGSAIIMY. Over 259–271 the chain is Extracellular; it reads MAPKSRHPEEQQK. Residues 272–291 form a helical membrane-spanning segment; the sequence is VFFLFYSFFNPTLNPLIYSL. Over 292–310 the chain is Cytoplasmic; it reads RNGEVKGALRRALGKESHS.

This sequence belongs to the G-protein coupled receptor 1 family.

It localises to the cell membrane. Functionally, odorant receptor. The polypeptide is Olfactory receptor 2A1/2A42 (OR2A1) (Homo sapiens (Human)).